The following is a 260-amino-acid chain: MPQNEYMEEHRKRHGRRLDYEEKKRKRTAREAHKASADAQKIFGHKAKLHHARRHAEKVQMKKTLKAHDERNVKQKDDGAVKEGALPAYLLDRDGQKDAKALSSAVKDRRKDRAAKYSVPLPKVRGIAEEEMFKVIKTGKSKSKSWKRMVNKATFVGEGFTRKPVKLERFIRPMGLRMTKANVTHPELKTTFQLPILGVKKNPQSPLYTSLGVLTKGTILEVNVSELGMVTTGGKVVWSKYAQITNNPENDGCINSVLLV.

Disordered stretches follow at residues 1–37 (MPQNEYMEEHRKRHGRRLDYEEKKRKRTAREAHKASA) and 60–79 (QMKKTLKAHDERNVKQKDDG). The Nuclear localization signal motif lies at 11–18 (RKRHGRRL). Composition is skewed to basic and acidic residues over residues 17 to 36 (RLDYEEKKRKRTAREAHKAS) and 66 to 79 (KAHDERNVKQKDDG).

The protein belongs to the eukaryotic ribosomal protein eS8 family. Ribosome biogenesis protein NSA2 subfamily. As to quaternary structure, component of the pre-66S ribosomal particle. Interacts with NOP7 and RRP1. Interacts with RSA4 (via WD repeats).

The protein localises to the nucleus. The protein resides in the nucleolus. Functionally, involved in the biogenesis of the 60S ribosomal subunit. May play a part in the quality control of pre-60S particles. The protein is Ribosome biogenesis protein NSA2 (NSA2) of Cryptococcus neoformans var. neoformans serotype D (strain JEC21 / ATCC MYA-565) (Filobasidiella neoformans).